We begin with the raw amino-acid sequence, 1051 residues long: Ubiquitin-activating enzyme E1 2 (1051 aa).

Positions 1-32 (MLPRKREIVAGEVEDLQKKTRAGEGEATREEG) are enriched in basic and acidic residues. The segment at 1–42 (MLPRKREIVAGEVEDLQKKTRAGEGEATREEGDAAMAGRGNE) is disordered. 2 consecutive repeat copies span residues 56–194 (GRET…GSVF) and 453–605 (GSTL…QMVI). Residues 56–605 (GRETMKPLFG…GAKCNTQMVI (550 aa)) form a 2 approximate repeats region. ATP is bound by residues A472, D498, R509, K522, and 570–571 (DN). The Glycyl thioester intermediate role is filled by C626.

It belongs to the ubiquitin-activating E1 family. As to quaternary structure, monomer.

It catalyses the reaction ATP + ubiquitin + [E1 ubiquitin-activating enzyme]-L-cysteine = AMP + diphosphate + S-ubiquitinyl-[E1 ubiquitin-activating enzyme]-L-cysteine.. The protein operates within protein modification; protein ubiquitination. Activates ubiquitin by first adenylating its C-terminal glycine residue with ATP, and thereafter linking this residue to the side chain of a cysteine residue in E1, yielding a ubiquitin-E1 thioester and free AMP. The chain is Ubiquitin-activating enzyme E1 2 (UBA2) from Triticum aestivum (Wheat).